Consider the following 355-residue polypeptide: Mitogen-activated protein kinase (355 aa).

One can recognise a Protein kinase domain in the interval 23–311 (YDIQDVVGEG…VEEALKHPYL (289 aa)). Residues 29–37 (VGEGAYGVV) and K52 each bind ATP. D147 acts as the Proton acceptor in catalysis. Phosphothreonine is present on T183. The TXY signature appears at 183–185 (TEY). Y185 carries the post-translational modification Phosphotyrosine.

It belongs to the protein kinase superfamily. CMGC Ser/Thr protein kinase family. MAP kinase subfamily. Post-translationally, dually phosphorylated on Thr-183 and Tyr-185, which activates the enzyme.

It localises to the nucleus. The catalysed reaction is L-seryl-[protein] + ATP = O-phospho-L-seryl-[protein] + ADP + H(+). It carries out the reaction L-threonyl-[protein] + ATP = O-phospho-L-threonyl-[protein] + ADP + H(+). Its activity is regulated as follows. Activated by tyrosine and threonine phosphorylation. Functionally, responds to activation by environmental stress by phosphorylating downstream targets. This Fusarium vanettenii (Neocosmospora pisi) protein is Mitogen-activated protein kinase (MAPK).